We begin with the raw amino-acid sequence, 956 residues long: MAM domain-containing glycosylphosphatidylinositol anchor protein 2 (956 aa).

The first 25 residues, M1 to A25, serve as a signal peptide directing secretion. 2 consecutive Ig-like domains span residues P27 to D127 and P134 to S232. 2 disulfides stabilise this stretch: C62–C110 and C159–C216. Residues N92, N213, and N237 are each glycosylated (N-linked (GlcNAc...) asparagine). 4 consecutive Ig-like domains span residues P242 to V328, P340 to S436, P442 to Q533, and P540 to T627. Disulfide bonds link C264/C310 and C359/C417. N434, N443, N504, N610, and N703 each carry an N-linked (GlcNAc...) asparagine glycan. 2 cysteine pairs are disulfide-bonded: C465-C515 and C561-C611. Residues D638–V739 form the Fibronectin type-III domain. Residues F746–K921 enclose the MAM domain. D931 is lipidated: GPI-anchor amidated aspartate. A propeptide spans G932–R956 (removed in mature form).

In terms of assembly, interacts (through the Ig-like domains) with NLGN2. Detected in Leydig cells, syncytiotrophoblast, duodenal villi epithelial cells and neutrophils from kidney and cutaneous squamous cell carcinoma (at protein level).

The protein resides in the cell membrane. Its function is as follows. May be involved in cell-cell interactions. This chain is MAM domain-containing glycosylphosphatidylinositol anchor protein 2 (MDGA2), found in Homo sapiens (Human).